Consider the following 60-residue polypeptide: Large ribosomal subunit protein bL32 (60 aa).

Residues 1–23 (MAVPKRKKSKSRRNMHRSHHAIK) form a disordered region.

Belongs to the bacterial ribosomal protein bL32 family.

The protein is Large ribosomal subunit protein bL32 of Wolbachia sp. subsp. Brugia malayi (strain TRS).